The primary structure comprises 108 residues: Type III secretion system chaperone SseA (108 aa).

A coiled-coil region spans residues 69-97 (NQEAEKDLKKIVSLFKQLEVRLKQLNAQA).

In terms of assembly, binds to SseB and SseD.

Its subcellular location is the cytoplasm. Functions as a type III secretion system (T3SS) chaperone, which is required for SseB and SseD accumulation and secretion. May have a direct role in secretion of SseB and SseD, or may facilitate their correct folding, for efficient secretion and function. Required for survival and replication within epithelial cells and macrophages. This is Type III secretion system chaperone SseA (sseA) from Salmonella typhimurium (strain LT2 / SGSC1412 / ATCC 700720).